A 199-amino-acid chain; its full sequence is MAEAPGDIERLIELMARLPGLGPRSARRAVLVMLKKRGAVMAPLAQAMAEVAATARDCARCGNITSADLCDICRDDRRATGELCVVEDVADLWALERAGVFRGRYHVLGGVLSALDSVGPDELRIPRLAERVRDEGISEVILALNATVDGQTTAHYIADVLEPSGVQVTSLAQGVPIGGELDYLDDGTIGAALRARRRF.

The segment at C58–C73 adopts a C4-type zinc-finger fold. The 96-residue stretch at G81–P176 folds into the Toprim domain.

Belongs to the RecR family.

May play a role in DNA repair. It seems to be involved in an RecBC-independent recombinational process of DNA repair. It may act with RecF and RecO. The sequence is that of Recombination protein RecR from Cereibacter sphaeroides (strain ATCC 17025 / ATH 2.4.3) (Rhodobacter sphaeroides).